The primary structure comprises 357 residues: Phosphoribosylformylglycinamidine cyclo-ligase (357 aa).

This sequence belongs to the AIR synthase family.

It localises to the cytoplasm. It catalyses the reaction 2-formamido-N(1)-(5-O-phospho-beta-D-ribosyl)acetamidine + ATP = 5-amino-1-(5-phospho-beta-D-ribosyl)imidazole + ADP + phosphate + H(+). It functions in the pathway purine metabolism; IMP biosynthesis via de novo pathway; 5-amino-1-(5-phospho-D-ribosyl)imidazole from N(2)-formyl-N(1)-(5-phospho-D-ribosyl)glycinamide: step 2/2. This chain is Phosphoribosylformylglycinamidine cyclo-ligase, found in Rhodopseudomonas palustris (strain ATCC BAA-98 / CGA009).